Reading from the N-terminus, the 261-residue chain is Flagellar L-ring protein (261 aa).

The first 15 residues, 1–15, serve as a signal peptide directing secretion; the sequence is MKRLLCLLLLTTLTG. Cysteine 16 is lipidated: N-palmitoyl cysteine. A lipid anchor (S-diacylglycerol cysteine) is attached at cysteine 16. Residues 121–133 are compositionally biased toward basic and acidic residues; the sequence is KSADAELSKKNDS. Positions 121–140 are disordered; it reads KSADAELSKKNDSSMDPLQV.

The protein belongs to the FlgH family. As to quaternary structure, the basal body constitutes a major portion of the flagellar organelle and consists of four rings (L,P,S, and M) mounted on a central rod.

The protein localises to the cell outer membrane. Its subcellular location is the bacterial flagellum basal body. Assembles around the rod to form the L-ring and probably protects the motor/basal body from shearing forces during rotation. In Aliivibrio salmonicida (strain LFI1238) (Vibrio salmonicida (strain LFI1238)), this protein is Flagellar L-ring protein.